The chain runs to 168 residues: MNTLQGPVSFKDVAVDFTQEEWRQLDPDEKIAYGDVMLENYSHLVSVGYDYHQAKHHHGVEVKEVEQGEEPWIMEGEFPCQHSPEPAKAIKPIDRKSVHQICSGPVVLSLSTAVKELVENSLDAGATNIDLKLKDYGVDLIEVSDNGCGVEEENFEGLISFSSETSHM.

The KRAB domain occupies 8–84 (VSFKDVAVDF…EGEFPCQHSP (77 aa)).

This sequence belongs to the DNA mismatch repair MutL/HexB family.

In Homo sapiens (Human), this protein is Putative postmeiotic segregation increased 2-like protein 3 (PMS2P3).